The sequence spans 471 residues: Proton-coupled amino acid transporter-like protein pathetic (471 aa).

N61 is a glycosylation site (N-linked (GlcNAc...) asparagine). The next 10 membrane-spanning stretches (helical) occupy residues 81-101, 153-173, 187-207, 216-236, 253-273, 283-303, 337-357, 375-395, 397-417, and 432-452; these read FAFM…TAFI, ILFG…VIVA, AVSL…IAWV, VSMV…YYLV, LPQF…VMPL, FLGI…IYML, LISL…LEII, VLRT…PTIG, FMGL…PVVI, and WILW…VFGT.

The protein belongs to the amino acid/polyamine transporter 2 family. In third instar larvae, expressed at highest levels in the brain and digestive system with particularly high levels in surface glia of the brain (at protein level). In third instar larvae, expressed in all cells of the body wall (at protein level). Within the body wall of third instar larvae, most highly expressed in epithelial cells and sensory neurons. Expressed at a similar level in all da neurons (at protein level). Widely expressed during embryonic and late larval stages. Levels are highly dynamic in embryogenesis with surges of expression in many structures, including muscle primordia, salivary glands, proventriculus, trachea and gonads. Expressed in all or most cells of larval imaginal disks. Expression is also particularly strong in the pouch and hinge regions of the wing disk and in the morphogenetic furrow of the eye disk.

The protein localises to the cell membrane. It localises to the lysosome membrane. It is found in the late endosome membrane. The protein resides in the cell projection. Its subcellular location is the axon. The protein localises to the dendrite. It localises to the perikaryon. It is found in the cytoplasm. Its function is as follows. Amino acid transporter which has pH-dependent electrogenic transport activity for alanine and glycine but not for proline. Plays a role in positive regulation of growth by directly or indirectly modulating the effects of the TOR signaling pathway. Required in a cell-autonomous manner for dendrite growth in neurons with large dendrite arbors. The polypeptide is Proton-coupled amino acid transporter-like protein pathetic (Drosophila melanogaster (Fruit fly)).